Consider the following 657-residue polypeptide: Bifunctional lysine-specific demethylase and histidyl-hydroxylase NO66 (657 aa).

2 disordered regions span residues 1–141 (MQKA…QTSP) and 165–198 (KSCPLPSKKDSVTKSPMTVHEAPKVDSATSNSNE). Polar residues predominate over residues 32-41 (SAKTVDTVTD). Residues 55-71 (AEKERRKYLQARVRAEG) are compositionally biased toward basic and acidic residues. Polar residues-rich tracts occupy residues 73-84 (SASTSSKSNATR) and 132-141 (RSQGLEQTSP). S133 carries the post-translational modification Phosphoserine. T139 is modified (phosphothreonine). S140 is modified (phosphoserine). Residues 315–454 (NPSTYLLGLR…NLLETLMPIV (140 aa)) enclose the JmjC domain. 3 residues coordinate Fe cation: H355, D357, and H420.

This sequence belongs to the ROX family. NO66 subfamily. The cofactor is Fe(2+).

It is found in the nucleus. It catalyses the reaction N(6),N(6)-dimethyl-L-lysyl(36)-[histone H3] + 2 2-oxoglutarate + 2 O2 = L-lysyl(36)-[histone H3] + 2 formaldehyde + 2 succinate + 2 CO2. Oxygenase that can act as both a histone lysine demethylase and a ribosomal histidine hydroxylase. Specifically demethylates 'Lys-4' (H3K4me) and 'Lys-36' (H3K36me) of histone H3, thereby playing a central role in histone code. The sequence is that of Bifunctional lysine-specific demethylase and histidyl-hydroxylase NO66 from Drosophila erecta (Fruit fly).